We begin with the raw amino-acid sequence, 283 residues long: Pantothenate synthetase 2 (283 aa).

34–41 contributes to the ATP binding site; sequence MGALHDGH. The Proton donor role is filled by histidine 41. Position 65 (glutamine 65) interacts with (R)-pantoate. Glutamine 65 contacts beta-alanine. 152–155 contributes to the ATP binding site; the sequence is GEKD. Residue glutamine 158 participates in (R)-pantoate binding. ATP contacts are provided by residues valine 181 and 189-192; that span reads MSSR.

Belongs to the pantothenate synthetase family. Homodimer.

The protein localises to the cytoplasm. The catalysed reaction is (R)-pantoate + beta-alanine + ATP = (R)-pantothenate + AMP + diphosphate + H(+). It functions in the pathway cofactor biosynthesis; (R)-pantothenate biosynthesis; (R)-pantothenate from (R)-pantoate and beta-alanine: step 1/1. Catalyzes the condensation of pantoate with beta-alanine in an ATP-dependent reaction via a pantoyl-adenylate intermediate. This chain is Pantothenate synthetase 2, found in Bradyrhizobium diazoefficiens (strain JCM 10833 / BCRC 13528 / IAM 13628 / NBRC 14792 / USDA 110).